The following is a 153-amino-acid chain: uncharacterized protein (153 aa).

A signal peptide spans 1-21 (MKITITSLLFFLVMIVELASA).

This is an uncharacterized protein from Saccharomyces cerevisiae (strain ATCC 204508 / S288c) (Baker's yeast).